Consider the following 529-residue polypeptide: Corneodesmosin (529 aa).

The first 32 residues, 1–32, serve as a signal peptide directing secretion; it reads MGSSRAPWMGRVGGHGMMALLLAGLLLPGTLA. Disordered stretches follow at residues 38 to 248 and 383 to 492; these read FSDP…SVSG and GSTG…SSAG. Low complexity-rich tracts occupy residues 58 to 83, 90 to 100, 111 to 175, 189 to 231, 392 to 408, and 426 to 441; these read GKGD…SARS, GSSSGSSIAQG, GYSQ…NGSA, PSQP…SGGP, SPSS…SSSS, and PGTG…QSSG. A glycan (N-linked (GlcNAc...) asparagine) is linked at asparagine 172. Over residues 449–467 the composition is skewed to polar residues; the sequence is GSKSSSSGHPCMSVSSLTL.

It localises to the secreted. In terms of biological role, important for the epidermal barrier integrity. The chain is Corneodesmosin (CDSN) from Pan troglodytes (Chimpanzee).